The primary structure comprises 116 residues: ATP-dependent Clp protease adapter protein ClpS (116 aa).

Polar residues predominate over residues 1–11 (MRRFNTIMQGK). The segment at 1 to 23 (MRRFNTIMQGKTNGGNGPESGTV) is disordered.

Belongs to the ClpS family. In terms of assembly, binds to the N-terminal domain of the chaperone ClpA.

Its function is as follows. Involved in the modulation of the specificity of the ClpAP-mediated ATP-dependent protein degradation. The protein is ATP-dependent Clp protease adapter protein ClpS of Brucella melitensis biotype 2 (strain ATCC 23457).